Here is a 122-residue protein sequence, read N- to C-terminus: Small ribosomal subunit protein uS13 (122 aa).

The interval 93 to 122 (RRGLPVRGQRTKTNARTRKGPKKTIAGKKK) is disordered.

It belongs to the universal ribosomal protein uS13 family. Part of the 30S ribosomal subunit. Forms a loose heterodimer with protein S19. Forms two bridges to the 50S subunit in the 70S ribosome.

In terms of biological role, located at the top of the head of the 30S subunit, it contacts several helices of the 16S rRNA. In the 70S ribosome it contacts the 23S rRNA (bridge B1a) and protein L5 of the 50S subunit (bridge B1b), connecting the 2 subunits; these bridges are implicated in subunit movement. Contacts the tRNAs in the A and P-sites. The sequence is that of Small ribosomal subunit protein uS13 from Corynebacterium efficiens (strain DSM 44549 / YS-314 / AJ 12310 / JCM 11189 / NBRC 100395).